A 593-amino-acid chain; its full sequence is ABC1 family protein lscO (593 aa).

Disordered stretches follow at residues 1–29 and 441–467; these read MDVAFPGMERHDEKNPPGDDGTKPTGGKK and PYKNPSSSDDESGESWQRTKETPEERK. Composition is skewed to basic and acidic residues over residues 8 to 22 and 457 to 467; these read MERHDEKNPPGDDGT and QRTKETPEERK.

It belongs to the protein kinase superfamily. ADCK protein kinase family.

Its function is as follows. ABC1 family protein; part of the gene cluster that mediates the biosynthesis of the lipopeptide antibiotics leucinostatins that show extensive biological activities, including antimalarial, antiviral, antibacterial, antifungal, and antitumor activities, as well as phytotoxic. The function of lcsO within the leucinostatins biosynthesis has not been identified yet. This Purpureocillium lilacinum (Paecilomyces lilacinus) protein is ABC1 family protein lscO.